The primary structure comprises 604 residues: uncharacterized protein (604 aa).

The tract at residues 239–259 (ELNSPQELNDPQELNNSQDLN) is disordered.

This is an uncharacterized protein from Escherichia coli (strain K12).